The primary structure comprises 116 residues: Ribosome-binding factor A (116 aa).

It belongs to the RbfA family. In terms of assembly, monomer. Binds 30S ribosomal subunits, but not 50S ribosomal subunits or 70S ribosomes.

The protein resides in the cytoplasm. One of several proteins that assist in the late maturation steps of the functional core of the 30S ribosomal subunit. Associates with free 30S ribosomal subunits (but not with 30S subunits that are part of 70S ribosomes or polysomes). Required for efficient processing of 16S rRNA. May interact with the 5'-terminal helix region of 16S rRNA. This is Ribosome-binding factor A from Streptococcus agalactiae.